The chain runs to 217 residues: Probable ribonuclease P protein subunit 1 (217 aa).

Belongs to the eukaryotic/archaeal RNase P protein component 1 family.

The protein localises to the nucleus. It localises to the nucleolus. It carries out the reaction Endonucleolytic cleavage of RNA, removing 5'-extranucleotides from tRNA precursor.. Its function is as follows. Part of ribonuclease P, a protein complex that generates mature tRNA molecules by cleaving their 5'-ends. This Schizosaccharomyces pombe (strain 972 / ATCC 24843) (Fission yeast) protein is Probable ribonuclease P protein subunit 1.